A 351-amino-acid polypeptide reads, in one-letter code: Glycerol-3-phosphate dehydrogenase [NAD(P)+] (351 aa).

Residues Ser-12, Trp-13, His-33, and Lys-114 each contribute to the NADPH site. Sn-glycerol 3-phosphate contacts are provided by Lys-114, Gly-145, and Ser-147. Position 149 (Ala-149) interacts with NADPH. Lys-200, Asp-253, Ser-263, Arg-264, and Asn-265 together coordinate sn-glycerol 3-phosphate. Residue Lys-200 is the Proton acceptor of the active site. Arg-264 is a binding site for NADPH. Val-288 and Glu-290 together coordinate NADPH.

It belongs to the NAD-dependent glycerol-3-phosphate dehydrogenase family.

Its subcellular location is the cytoplasm. It carries out the reaction sn-glycerol 3-phosphate + NAD(+) = dihydroxyacetone phosphate + NADH + H(+). It catalyses the reaction sn-glycerol 3-phosphate + NADP(+) = dihydroxyacetone phosphate + NADPH + H(+). The protein operates within membrane lipid metabolism; glycerophospholipid metabolism. In terms of biological role, catalyzes the reduction of the glycolytic intermediate dihydroxyacetone phosphate (DHAP) to sn-glycerol 3-phosphate (G3P), the key precursor for phospholipid synthesis. In Lacticaseibacillus paracasei (strain ATCC 334 / BCRC 17002 / CCUG 31169 / CIP 107868 / KCTC 3260 / NRRL B-441) (Lactobacillus paracasei), this protein is Glycerol-3-phosphate dehydrogenase [NAD(P)+].